The chain runs to 134 residues: Protein LctB (134 aa).

This is Protein LctB (lctB) from Geobacillus stearothermophilus (Bacillus stearothermophilus).